We begin with the raw amino-acid sequence, 185 residues long: Nuclear transcription factor Y subunit B-3 (185 aa).

Gly residues predominate over residues 1-36 (MADGPGSPGGGGGSHESGSPRGGGGGGGGGGGGGGV). The tract at residues 1–39 (MADGPGSPGGGGGSHESGSPRGGGGGGGGGGGGGGVREQ) is disordered. The DNA-binding element occupies 43-49 (LPIANIS). The interval 70–81 (VQECVSEFISFI) is subunit association domain (SAD). Residues 145 to 164 (KDVLGSHGGSSSSAQGMGQQ) are disordered. Low complexity predominate over residues 153–164 (GSSSSAQGMGQQ).

Belongs to the NFYB/HAP3 subunit family. In terms of assembly, heterotrimeric transcription factor composed of three components, NF-YA, NF-YB and NF-YC. NF-YB and NF-YC must interact and dimerize for NF-YA association and DNA binding. As to expression, ubiquitous.

The protein localises to the nucleus. In terms of biological role, component of the NF-Y/HAP transcription factor complex. The NF-Y complex stimulates the transcription of various genes by recognizing and binding to a CCAAT motif in promoters. May regulate the expression of photosynthetic genes, and may be involved in chloroplast and amyloplast development. In Oryza sativa subsp. japonica (Rice), this protein is Nuclear transcription factor Y subunit B-3 (NFYB3).